The following is a 115-amino-acid chain: Toxin-like structure LSTX-D1 (115 aa).

The N-terminal stretch at 1–22 (MKVLVLFSVLFLTLFSYSSTEA) is a signal peptide. A propeptide spanning residues 23-44 (IDEFDSDAEEDMLSLMANEQVR) is cleaved from the precursor. 4 disulfides stabilise this stretch: cysteine 48–cysteine 63, cysteine 55–cysteine 72, cysteine 62–cysteine 87, and cysteine 74–cysteine 85.

Belongs to the neurotoxin 19 (CSTX) family. 01 subfamily. As to expression, expressed by the venom gland.

The protein resides in the secreted. The protein is Toxin-like structure LSTX-D1 of Lycosa singoriensis (Wolf spider).